A 441-amino-acid polypeptide reads, in one-letter code: Probable cyclic di-GMP phosphodiesterase VC_1348 (441 aa).

Residues 72-187 (TILIVDDSPD…LLKSRVHTHL (116 aa)) enclose the Response regulatory domain. 4-aspartylphosphate is present on D120. Residues 214–425 (LDRMQDAVVF…FIDIAQKFAD (212 aa)) enclose the HD-GYP domain.

It catalyses the reaction 3',3'-c-di-GMP + 2 H2O = 2 GMP + 2 H(+). Its function is as follows. Probable phosphodiesterase (PDE) that catalyzes the hydrolysis of cyclic diguanylate (c-di-GMP). Increases motility and decreases biofilm formation in vivo. The sequence is that of Probable cyclic di-GMP phosphodiesterase VC_1348 from Vibrio cholerae serotype O1 (strain ATCC 39315 / El Tor Inaba N16961).